Here is a 435-residue protein sequence, read N- to C-terminus: Oocyte zinc finger protein XlCOF22 (435 aa).

The segment at 71 to 92 is disordered; the sequence is NANTSAHFSRNRDSDKHERTHT. Over residues 80-91 the composition is skewed to basic and acidic residues; that stretch reads RNRDSDKHERTH. C2H2-type zinc fingers lie at residues 97 to 120, 126 to 148, 154 to 176, 182 to 204, 210 to 232, 238 to 260, 266 to 288, 294 to 316, 322 to 345, 351 to 373, 379 to 402, and 408 to 430; these read HSCSQCGKCFSSSSDLLAHRRQSH, FSCSECGKCFSFRSRLIDHQRTH, FCCFQCGKSFSVRSRFLDHRRTH, FSCLECGKCFLFRSRLLEHQRTH, FSCLKCGKCFSVRSRLKDHQRTH, FSCLECGKSFSFRPCLIDHQRTH, FSCFQCGKCFSFQSRLINHQRTH, FSCSECGKSFSNQSCLRVHQRTH, YSCSECGKSFVTSSQLAVHRRRTH, FSCSECGKCFSNQSCLRVHQRTH, FSCSECGKSFVTSSKLASHQRQTH, and VSCSECGKCFTRKRSLKVHFKIH.

This sequence belongs to the krueppel C2H2-type zinc-finger protein family.

It localises to the nucleus. In terms of biological role, may be involved in transcriptional regulation. This chain is Oocyte zinc finger protein XlCOF22, found in Xenopus laevis (African clawed frog).